A 474-amino-acid chain; its full sequence is L-arabinose isomerase (474 aa).

Residues Glu306, Glu331, His348, and His447 each coordinate Mn(2+).

The protein belongs to the arabinose isomerase family. Mn(2+) is required as a cofactor.

The enzyme catalyses beta-L-arabinopyranose = L-ribulose. The protein operates within carbohydrate degradation; L-arabinose degradation via L-ribulose; D-xylulose 5-phosphate from L-arabinose (bacterial route): step 1/3. Functionally, catalyzes the conversion of L-arabinose to L-ribulose. In Lactiplantibacillus plantarum (strain ATCC BAA-793 / NCIMB 8826 / WCFS1) (Lactobacillus plantarum), this protein is L-arabinose isomerase.